We begin with the raw amino-acid sequence, 1659 residues long: Cortactin-binding protein 2 (1659 aa).

The tract at residues 1 to 23 (MATDGASCEPDLSRAPEDAAGAA) is disordered. Residues 119 to 276 (RKMQERMSAQ…EQLKRGSDSK (158 aa)) adopt a coiled-coil conformation. 2 disordered regions span residues 324-436 (LTMP…LHPG) and 450-474 (GNAN…SPTS). Low complexity-rich tracts occupy residues 337 to 348 (ASANAKGSAAMA) and 381 to 392 (GPSTGLTPDPTS). A compositionally biased stretch (polar residues) spans 405–418 (TAQTPGITPQNSQA). Residue Arg-494 is modified to Asymmetric dimethylarginine. The interval 495-612 (FTGPQAGAPP…SSPQLPPKPS (118 aa)) is disordered. The span at 579 to 589 (TVASPPSSLPQ) shows a compositional bias: polar residues. ANK repeat units lie at residues 705-735 (GRPT…DINY), 739-768 (DGHS…QVNA), 772-801 (NGFT…NINH), 805-834 (GGQT…DRNV), and 838-867 (DGWT…PAHG). A disordered region spans residues 869 to 893 (SFSEEESESGVFDLDGGGESPEGKS). The ANK 6 repeat unit spans residues 908 to 938 (EGWTAAHIAASKGFKNCLEILCRHGGLETER). Residues 1443–1478 (KKKGESGAWRKVNTSPRRKSGRFSLPTWNKPDLSTE) form a disordered region. The residue at position 1520 (Ser-1520) is a Phosphoserine. Positions 1613 to 1659 (RSKVTQCSQNTKRNSSSSNTRQIEINNNSKEENWNLHKNEHLEKPNK) are disordered. Residues 1620–1634 (SQNTKRNSSSSNTRQ) show a composition bias toward low complexity. Basic and acidic residues predominate over residues 1641–1659 (SKEENWNLHKNEHLEKPNK).

In terms of assembly, interacts with CTTN/cortactin SH3 domain. Interacts with STRN, STRN4/zinedin and MOB4/phocein; this interactions mediate the association with the STRIPAK core complex and may regulate dendritic spine distribution of the STRIPAK complex in hippocampal neurons. Activation of glutamate receptors weakens the interaction with STRN and STRN4.

The protein resides in the cytoplasm. It is found in the cell cortex. It localises to the cell projection. The protein localises to the dendritic spine. Regulates the dendritic spine distribution of CTTN/cortactin in hippocampal neurons, and thus controls dendritic spinogenesis and dendritic spine maintenance. Associates with the striatin-interacting phosphatase and kinase (STRIPAK) core complex to regulate dendritic spine distribution of the STRIPAK complex in hippocampal neurons. This Saimiri boliviensis boliviensis (Bolivian squirrel monkey) protein is Cortactin-binding protein 2 (CTTNBP2).